The primary structure comprises 244 residues: Carboxy-S-adenosyl-L-methionine synthase (244 aa).

S-adenosyl-L-methionine-binding positions include Tyr-40, 65–67 (GCS), 90–91 (DN), 119–120 (DL), Asn-134, and Arg-201.

It belongs to the class I-like SAM-binding methyltransferase superfamily. Cx-SAM synthase family. In terms of assembly, homodimer.

It catalyses the reaction prephenate + S-adenosyl-L-methionine = carboxy-S-adenosyl-L-methionine + 3-phenylpyruvate + H2O. Catalyzes the conversion of S-adenosyl-L-methionine (SAM) to carboxy-S-adenosyl-L-methionine (Cx-SAM). In Geobacter metallireducens (strain ATCC 53774 / DSM 7210 / GS-15), this protein is Carboxy-S-adenosyl-L-methionine synthase.